Consider the following 199-residue polypeptide: Copper transport protein CTR4 (199 aa).

The next 2 helical transmembrane spans lie at 62–82 (KGMF…IELI) and 152–172 (AFFV…FIFL).

The protein belongs to the copper transporter (Ctr) (TC 1.A.56) family. SLC31A subfamily.

The protein resides in the membrane. Functionally, required for high affinity copper (probably reduced Cu I) transport into the cell. Plays a role in fungal pathogenesis during host infection. This is Copper transport protein CTR4 from Cryptococcus neoformans var. grubii serotype A (strain H99 / ATCC 208821 / CBS 10515 / FGSC 9487) (Filobasidiella neoformans var. grubii).